The following is a 217-amino-acid chain: Outer-membrane lipoprotein LolB (217 aa).

The first 20 residues, 1 to 20 (MSKALRTLALSGLVLVGLSA), serve as a signal peptide directing secretion. A lipid anchor (N-palmitoyl cysteine) is attached at Cys21. The S-diacylglycerol cysteine moiety is linked to residue Cys21.

The protein belongs to the LolB family. In terms of assembly, monomer.

Its subcellular location is the cell outer membrane. Plays a critical role in the incorporation of lipoproteins in the outer membrane after they are released by the LolA protein. The polypeptide is Outer-membrane lipoprotein LolB (Xanthomonas oryzae pv. oryzae (strain MAFF 311018)).